Consider the following 348-residue polypeptide: Small ribosomal subunit biogenesis GTPase RsgA (348 aa).

The span at 1–14 (MAKRKLSKQQKWRI) shows a compositional bias: basic residues. Residues 1 to 39 (MAKRKLSKQQKWRIQKIQDERTKRATRKETQLESQLSGG) are disordered. The segment covering 16 to 31 (KIQDERTKRATRKETQ) has biased composition (basic and acidic residues). The CP-type G domain occupies 116–275 (FGQLKPIAAN…LIDSPGIREF (160 aa)). GTP-binding positions include 163–166 (NKQD) and 217–225 (GQSGVGKSS). Zn(2+)-binding residues include C299, C304, H306, and C312.

The protein belongs to the TRAFAC class YlqF/YawG GTPase family. RsgA subfamily. In terms of assembly, monomer. Associates with 30S ribosomal subunit, binds 16S rRNA. It depends on Zn(2+) as a cofactor.

It localises to the cytoplasm. One of several proteins that assist in the late maturation steps of the functional core of the 30S ribosomal subunit. Helps release RbfA from mature subunits. May play a role in the assembly of ribosomal proteins into the subunit. Circularly permuted GTPase that catalyzes slow GTP hydrolysis, GTPase activity is stimulated by the 30S ribosomal subunit. The sequence is that of Small ribosomal subunit biogenesis GTPase RsgA from Hahella chejuensis (strain KCTC 2396).